Here is a 426-residue protein sequence, read N- to C-terminus: Delta-aminolevulinic acid dehydratase, chloroplastic (426 aa).

The N-terminal 45 residues, 1 to 45, are a transit peptide targeting the chloroplast; that stretch reads MASTVSFSPANVQMLQGRSCHGHAAFGGCSAVPRTGPRMRSVAVR. Residues 74 to 107 form a disordered region; it reads GRFPAPPPLVRPKAPEGTPQIRPLDLTKRPRRNR. Catalysis depends on lysine 293, which acts as the Schiff-base intermediate with substrate. Positions 303 and 315 each coordinate 5-aminolevulinate. Glutamate 331 contributes to the Mg(2+) binding site. Lysine 346 functions as the Schiff-base intermediate with substrate in the catalytic mechanism. 5-aminolevulinate-binding residues include serine 372 and tyrosine 411.

The protein belongs to the ALAD family. In terms of assembly, homooctamer. Requires Mg(2+) as cofactor.

Its subcellular location is the plastid. It localises to the chloroplast. It catalyses the reaction 2 5-aminolevulinate = porphobilinogen + 2 H2O + H(+). Its pathway is porphyrin-containing compound metabolism; protoporphyrin-IX biosynthesis; coproporphyrinogen-III from 5-aminolevulinate: step 1/4. Catalyzes an early step in the biosynthesis of tetrapyrroles. Binds two molecules of 5-aminolevulinate per subunit, each at a distinct site, and catalyzes their condensation to form porphobilinogen. In Oryza sativa subsp. japonica (Rice), this protein is Delta-aminolevulinic acid dehydratase, chloroplastic (HEMB).